The sequence spans 382 residues: MSTWLLPENIADVLPSEARKIEELRRRLLDRFRSYGYEMVMPPLLEYLESLLTSGGNELRLRTFKLVDQVSGRTLGLRADMTPQVARIDAHLLNRQGVTRLCYAGPVLHTRPRGLHASREQLQIGAEIYGHAGLEADQEIQQLMLDALHLTGLKKIRLDLCHAGVLAALFARDAAAAERGEALYEALAGKDVPRLNELTDDLGADTRAALRALPRLYGDASVLDDARRLLPALPEIARALDDLAHLAAQVKDAEVAIDLADLRGYAYHSGAMFAAYVDGVPNAVAHGGRYDHVGQAYGRARPATGFSLDLREIARISPVEARGAAILAPWKQDDALRAAVGALRDAGEVVIQALPGHDHVLDEFACDRALVERDGAWVIEPR.

The protein belongs to the class-II aminoacyl-tRNA synthetase family. HisZ subfamily. As to quaternary structure, heteromultimer composed of HisG and HisZ subunits.

It is found in the cytoplasm. It functions in the pathway amino-acid biosynthesis; L-histidine biosynthesis; L-histidine from 5-phospho-alpha-D-ribose 1-diphosphate: step 1/9. In terms of biological role, required for the first step of histidine biosynthesis. May allow the feedback regulation of ATP phosphoribosyltransferase activity by histidine. This is ATP phosphoribosyltransferase regulatory subunit from Burkholderia pseudomallei (strain K96243).